Consider the following 716-residue polypeptide: Lamin-like protein (716 aa).

2 stretches are compositionally biased toward basic residues: residues 1–10 (MDMSKKKSKR) and 35–45 (KKTKTTTKKKA). A disordered region spans residues 1–107 (MDMSKKKSKR…TIQSIPTTPI (107 aa)). The span at 62–107 (ITTTTTSTSTTNNNNITTTSTSSQQSNGTLSSSSSPTIQSIPTTPI) shows a compositional bias: low complexity. A coiled-coil region spans residues 130–450 (LREKDELSLI…KMRKQMADLK (321 aa)). The IF rod domain occupies 132-515 (EKDELSLIHN…ELVKGFEKTV (384 aa)). Positions 519-522 (KRKR) match the Nuclear localization signal motif. A disordered region spans residues 519-584 (KRKRSKLQHE…PTGPEQSELF (66 aa)). A compositionally biased stretch (polar residues) spans 532–545 (AANQDQNGMTIEEQ). Over residues 546-564 (SSTSTTTTTSATGSSSSTS) the composition is skewed to low complexity. A compositionally biased stretch (polar residues) spans 565-584 (HLDNIDSSKLPTGPEQSELF). An LTD domain is found at 575-698 (PTGPEQSELF…EETTTVTLPA (124 aa)). Positions 713–716 (CLIM) match the CAAX motif motif.

This sequence belongs to the intermediate filament family. As to quaternary structure, homodimer. Lamin dimers then assemble into dimeric head-to-tail polymers. Ultimately, two head-to-tail polymers assemble laterally into a protofilament with a uniformly shaped rod of 3.5 nm in diameter.

The protein resides in the nucleus lamina. Its subcellular location is the nucleus envelope. The protein localises to the nucleus inner membrane. Lamins are intermediate filament proteins that assemble into a filamentous meshwork, and which constitute the major components of the nuclear lamina, a fibrous layer on the nucleoplasmic side of the inner nuclear membrane. Lamins provide a framework for the nuclear envelope, bridging the nuclear envelope and chromatin, thereby playing an important role in nuclear assembly, chromatin organization, nuclear membrane and telomere dynamics. The structural integrity of the lamina is strictly controlled by the cell cycle, as seen by the disintegration and formation of the nuclear envelope in prophase and telophase, respectively. Helps to maintain integrity of nuclear structures in response to mechanical stress. This is Lamin-like protein from Dictyostelium discoideum (Social amoeba).